A 215-amino-acid chain; its full sequence is Osteoclast-stimulating factor 1 (215 aa).

Ser-2 carries the post-translational modification N-acetylserine. An SH3 domain is found at 12 to 71 (GQVKVFRALYTFEPRTPDELYFEEGDIIYITDMSDTSWWKGTCKGRTGLIPSNYVAEQAE). 3 ANK repeats span residues 72-101 (SIDN…GVNG), 105-135 (AGST…ELNQ), and 139-168 (LGDT…RTDL). Residues 192 to 215 (KQQGTDGARTLSNAEDYLDDEDSD) form a disordered region. Thr-201 carries the post-translational modification Phosphothreonine. Phosphoserine is present on residues Ser-203 and Ser-214.

As to quaternary structure, interacts with C-SRC and SMN1. Interacts with FASLG.

It localises to the cytoplasm. Functionally, induces bone resorption, acting probably through a signaling cascade which results in the secretion of factor(s) enhancing osteoclast formation and activity. This is Osteoclast-stimulating factor 1 (Ostf1) from Mus musculus (Mouse).